The following is a 491-amino-acid chain: Fatty acyl-CoA reductase 1 (491 aa).

The protein belongs to the fatty acyl-CoA reductase family. Expressed in the endodermal cell layer surrounding the central vasculature in roots. Expressed in the hilum region of seeds. Expressed in lateral root tips, cotyledons, the shoot apex, young leaves, petals, stamen filaments, and receptacle of siliques.

It carries out the reaction a long-chain fatty acyl-CoA + 2 NADPH + 2 H(+) = a long-chain primary fatty alcohol + 2 NADP(+) + CoA. Catalyzes the reduction of fatty acyl-CoA to fatty alcohols. Catalyzes specifically the formation of C18:0 and C22:0 fatty alcohols. Provides the fatty alcohols required for synthesis of suberin in roots, seed coat and wound-induced leaf tissue. Provides the fatty alcohols required for synthesis of alkyl hydroxycinnamates in root waxes. This Arabidopsis thaliana (Mouse-ear cress) protein is Fatty acyl-CoA reductase 1.